The sequence spans 242 residues: Protein crossbronx (242 aa).

Positions Gln-20–Ala-176 constitute a UBC core domain.

Belongs to the ubiquitin-conjugating enzyme family. FTS subfamily.

The polypeptide is Protein crossbronx (cbx) (Drosophila ananassae (Fruit fly)).